Reading from the N-terminus, the 316-residue chain is 4-hydroxy-3-methylbut-2-enyl diphosphate reductase (316 aa).

[4Fe-4S] cluster is bound at residue cysteine 12. Histidine 43 and histidine 81 together coordinate (2E)-4-hydroxy-3-methylbut-2-enyl diphosphate. Dimethylallyl diphosphate-binding residues include histidine 43 and histidine 81. Isopentenyl diphosphate-binding residues include histidine 43 and histidine 81. Cysteine 103 serves as a coordination point for [4Fe-4S] cluster. Histidine 131 contacts (2E)-4-hydroxy-3-methylbut-2-enyl diphosphate. Histidine 131 lines the dimethylallyl diphosphate pocket. An isopentenyl diphosphate-binding site is contributed by histidine 131. Glutamate 133 serves as the catalytic Proton donor. Threonine 170 serves as a coordination point for (2E)-4-hydroxy-3-methylbut-2-enyl diphosphate. [4Fe-4S] cluster is bound at residue cysteine 198. Serine 226, asparagine 228, and serine 271 together coordinate (2E)-4-hydroxy-3-methylbut-2-enyl diphosphate. Residues serine 226, asparagine 228, and serine 271 each contribute to the dimethylallyl diphosphate site. Serine 226, asparagine 228, and serine 271 together coordinate isopentenyl diphosphate.

Belongs to the IspH family. Requires [4Fe-4S] cluster as cofactor.

It catalyses the reaction isopentenyl diphosphate + 2 oxidized [2Fe-2S]-[ferredoxin] + H2O = (2E)-4-hydroxy-3-methylbut-2-enyl diphosphate + 2 reduced [2Fe-2S]-[ferredoxin] + 2 H(+). The catalysed reaction is dimethylallyl diphosphate + 2 oxidized [2Fe-2S]-[ferredoxin] + H2O = (2E)-4-hydroxy-3-methylbut-2-enyl diphosphate + 2 reduced [2Fe-2S]-[ferredoxin] + 2 H(+). Its pathway is isoprenoid biosynthesis; dimethylallyl diphosphate biosynthesis; dimethylallyl diphosphate from (2E)-4-hydroxy-3-methylbutenyl diphosphate: step 1/1. It functions in the pathway isoprenoid biosynthesis; isopentenyl diphosphate biosynthesis via DXP pathway; isopentenyl diphosphate from 1-deoxy-D-xylulose 5-phosphate: step 6/6. Its function is as follows. Catalyzes the conversion of 1-hydroxy-2-methyl-2-(E)-butenyl 4-diphosphate (HMBPP) into a mixture of isopentenyl diphosphate (IPP) and dimethylallyl diphosphate (DMAPP). Acts in the terminal step of the DOXP/MEP pathway for isoprenoid precursor biosynthesis. This chain is 4-hydroxy-3-methylbut-2-enyl diphosphate reductase, found in Bacillus cereus (strain AH820).